A 555-amino-acid chain; its full sequence is Ribonuclease J2 (555 aa).

The Zn(2+) site is built by histidine 74, histidine 76, histidine 142, and aspartate 164. 364 to 368 (HVSGH) lines the substrate pocket.

This sequence belongs to the metallo-beta-lactamase superfamily. RNA-metabolizing metallo-beta-lactamase-like family. Bacterial RNase J subfamily. As to quaternary structure, unclear whether it forms homodimers or belongs to a larger complex. According to probably does not form homodimers, while shows homodimer formation. Both reports show RNase J1 and J2 interaction, probably as a heterotetramer shows it is a component of a possible RNA degradosome complex composed of rny, rnjA, rnjB, pnp, pfkA and eno, while finds no evidence of an RNA degradosome complex. The cofactor is Zn(2+).

Its subcellular location is the cytoplasm. Its function is as follows. Endonucleolytically cleaves the 5'-leader sequence of certain mRNAs. Endonuclease digestion by the RNase J1/J2 complex occurs at a different site and in some cases more efficiently than J1 or J2 alone. The exonuclease activity of the J1/J2 complex is highly processive on substrates longer than 5 nucleotides, on shorter substrates is distributive. Plays a role in mRNA maturation and stability. Appears to have a limited effect on 16S rRNA maturation, despite its similarity to RNase J1. This subunit alone has very poor 5'-3' exonuclease activity. The protein is Ribonuclease J2 of Bacillus subtilis (strain 168).